Consider the following 391-residue polypeptide: Period circadian protein (391 aa).

Disordered stretches follow at residues 27–121, 163–188, 241–270, and 328–357; these read VTAP…PPVT, MLEY…WEGE, GSSA…QFTQ, and SPSG…TSQA. The segment covering 93–114 has biased composition (gly residues); it reads GTSGTGNSGDGGGGGGADGPGS. Positions 241–255 are enriched in gly residues; sequence GSSAGGNGSGTGNNN.

Forms a heterodimer with timeless (TIM); the complex then translocates into the nucleus. In terms of processing, phosphorylated with a circadian rhythmicity, probably by the double-time protein (dbt). Phosphorylation could be implicated in the stability of per monomer and in the formation of heterodimer per-tim.

Its subcellular location is the nucleus. It is found in the cytoplasm. The protein resides in the perinuclear region. Essential for biological clock functions. Determines the period length of circadian and ultradian rhythms; an increase in PER dosage leads to shortened circadian rhythms and a decrease leads to lengthened circadian rhythms. Essential for the circadian rhythmicity of locomotor activity, eclosion behavior, and for the rhythmic component of the male courtship song that originates in the thoracic nervous system. The biological cycle depends on the rhythmic formation and nuclear localization of the TIM-PER complex. Light induces the degradation of TIM, which promotes elimination of PER. Nuclear activity of the heterodimer coordinatively regulates PER and TIM transcription through a negative feedback loop. Behaves as a negative element in circadian transcriptional loop. Does not appear to bind DNA, suggesting indirect transcriptional inhibition. The protein is Period circadian protein (per) of Drosophila insularis (Fruit fly).